Reading from the N-terminus, the 477-residue chain is Small ribosomal subunit protein uS5m (477 aa).

It belongs to the universal ribosomal protein uS5 family. Component of the mitochondrial small ribosomal subunit (mt-SSU). Mature N.crassa 74S mitochondrial ribosomes consist of a small (37S) and a large (54S) subunit. The 37S small subunit contains a 16S ribosomal RNA (16S mt-rRNA) and 32 different proteins. The 54S large subunit contains a 23S rRNA (23S mt-rRNA) and 42 different proteins. uS3m, uS4m and uS5m form the narrow entry site of the mRNA channel.

It is found in the mitochondrion. In terms of biological role, component of the mitochondrial ribosome (mitoribosome), a dedicated translation machinery responsible for the synthesis of mitochondrial genome-encoded proteins, including at least some of the essential transmembrane subunits of the mitochondrial respiratory chain. The mitoribosomes are attached to the mitochondrial inner membrane and translation products are cotranslationally integrated into the membrane. The sequence is that of Small ribosomal subunit protein uS5m (mrps5) from Neurospora crassa (strain ATCC 24698 / 74-OR23-1A / CBS 708.71 / DSM 1257 / FGSC 987).